The sequence spans 400 residues: Queuine tRNA-ribosyltransferase (400 aa).

Catalysis depends on aspartate 93, which acts as the Proton acceptor. Substrate is bound by residues aspartate 93 to phenylalanine 97, aspartate 147, glutamine 190, and glycine 217. Positions glycine 248–aspartate 254 are RNA binding. Aspartate 267 serves as the catalytic Nucleophile. Positions threonine 272 to arginine 276 are RNA binding; important for wobble base 34 recognition. Zn(2+) is bound by residues cysteine 305, cysteine 307, cysteine 310, and histidine 336. The disordered stretch occupies residues arginine 375–arginine 400. Low complexity predominate over residues alanine 388–arginine 400.

It belongs to the queuine tRNA-ribosyltransferase family. As to quaternary structure, homodimer. Within each dimer, one monomer is responsible for RNA recognition and catalysis, while the other monomer binds to the replacement base PreQ1. Zn(2+) is required as a cofactor.

The catalysed reaction is 7-aminomethyl-7-carbaguanine + guanosine(34) in tRNA = 7-aminomethyl-7-carbaguanosine(34) in tRNA + guanine. It participates in tRNA modification; tRNA-queuosine biosynthesis. Its function is as follows. Catalyzes the base-exchange of a guanine (G) residue with the queuine precursor 7-aminomethyl-7-deazaguanine (PreQ1) at position 34 (anticodon wobble position) in tRNAs with GU(N) anticodons (tRNA-Asp, -Asn, -His and -Tyr). Catalysis occurs through a double-displacement mechanism. The nucleophile active site attacks the C1' of nucleotide 34 to detach the guanine base from the RNA, forming a covalent enzyme-RNA intermediate. The proton acceptor active site deprotonates the incoming PreQ1, allowing a nucleophilic attack on the C1' of the ribose to form the product. After dissociation, two additional enzymatic reactions on the tRNA convert PreQ1 to queuine (Q), resulting in the hypermodified nucleoside queuosine (7-(((4,5-cis-dihydroxy-2-cyclopenten-1-yl)amino)methyl)-7-deazaguanosine). This is Queuine tRNA-ribosyltransferase from Symbiobacterium thermophilum (strain DSM 24528 / JCM 14929 / IAM 14863 / T).